The sequence spans 62 residues: Large ribosomal subunit protein bL32 (62 aa).

Positions 28–62 (SIEPTTGEVHRRHHISPDGFYRGRQVIKAKEQDEE) are disordered.

Belongs to the bacterial ribosomal protein bL32 family.

The sequence is that of Large ribosomal subunit protein bL32 from Thioalkalivibrio sulfidiphilus (strain HL-EbGR7).